We begin with the raw amino-acid sequence, 192 residues long: Glycerol-3-phosphate acyltransferase (192 aa).

5 helical membrane-spanning segments follow: residues 4 to 24 (FAII…DVVI), 48 to 68 (LVLV…WVGY), 74 to 94 (YFEL…PIFF), 101 to 121 (GVAT…GSML), and 125 to 145 (LLIF…ALIL).

It belongs to the PlsY family. In terms of assembly, probably interacts with PlsX.

It is found in the cell inner membrane. The catalysed reaction is an acyl phosphate + sn-glycerol 3-phosphate = a 1-acyl-sn-glycero-3-phosphate + phosphate. It participates in lipid metabolism; phospholipid metabolism. Catalyzes the transfer of an acyl group from acyl-phosphate (acyl-PO(4)) to glycerol-3-phosphate (G3P) to form lysophosphatidic acid (LPA). This enzyme utilizes acyl-phosphate as fatty acyl donor, but not acyl-CoA or acyl-ACP. This is Glycerol-3-phosphate acyltransferase from Histophilus somni (strain 129Pt) (Haemophilus somnus).